A 258-amino-acid chain; its full sequence is Countin-1 (258 aa).

The first 21 residues, 1–21 (MNKLFSLILALFLVNSAVVSS), serve as a signal peptide directing secretion. One can recognise a Saposin B-type domain in the interval 22 to 106 (LDSCSICVDF…EKISVCKTND (85 aa)). Disulfide bonds link cysteine 25/cysteine 102, cysteine 28/cysteine 96, and cysteine 56/cysteine 69. 2 N-linked (GlcNAc...) asparagine glycosylation sites follow: asparagine 121 and asparagine 215. Low complexity predominate over residues 233 to 248 (AGSFSGSSQSTQTGAA). The tract at residues 233–258 (AGSFSGSSQSTQTGAASGSGSGFALF) is disordered. The span at 249–258 (SGSGSGFALF) shows a compositional bias: gly residues.

Belongs to the countin family. Component of the counting factor (CF) complex, which includes cf60, cf50, cf45-1 and ctnA.

It is found in the secreted. Cell-counting factor that limits the maximum size of the multicellular structure. May down-regulate the expression of gp24, which mediates cell adhesion. This is Countin-1 (ctnA) from Dictyostelium discoideum (Social amoeba).